We begin with the raw amino-acid sequence, 513 residues long: ATP synthase subunit alpha (513 aa).

Gly-169–Thr-176 serves as a coordination point for ATP.

This sequence belongs to the ATPase alpha/beta chains family. As to quaternary structure, F-type ATPases have 2 components, CF(1) - the catalytic core - and CF(0) - the membrane proton channel. CF(1) has five subunits: alpha(3), beta(3), gamma(1), delta(1), epsilon(1). CF(0) has three main subunits: a(1), b(2) and c(9-12). The alpha and beta chains form an alternating ring which encloses part of the gamma chain. CF(1) is attached to CF(0) by a central stalk formed by the gamma and epsilon chains, while a peripheral stalk is formed by the delta and b chains.

Its subcellular location is the cell inner membrane. The catalysed reaction is ATP + H2O + 4 H(+)(in) = ADP + phosphate + 5 H(+)(out). Produces ATP from ADP in the presence of a proton gradient across the membrane. The alpha chain is a regulatory subunit. The protein is ATP synthase subunit alpha of Halorhodospira halophila (strain DSM 244 / SL1) (Ectothiorhodospira halophila (strain DSM 244 / SL1)).